We begin with the raw amino-acid sequence, 139 residues long: Endoribonuclease YbeY (139 aa).

Zn(2+) contacts are provided by His-99, His-103, and His-109.

This sequence belongs to the endoribonuclease YbeY family. Zn(2+) serves as cofactor.

The protein resides in the cytoplasm. Single strand-specific metallo-endoribonuclease involved in late-stage 70S ribosome quality control and in maturation of the 3' terminus of the 16S rRNA. This is Endoribonuclease YbeY from Nautilia profundicola (strain ATCC BAA-1463 / DSM 18972 / AmH).